The sequence spans 1984 residues: Sodium channel protein type 9 subunit alpha (1984 aa).

Residues 1–125 (MAMLPPPGPQ…RRISIKILVH (125 aa)) lie on the Cytoplasmic side of the membrane. Over residues 26 to 39 (RISEEKAKGHKDEK) the composition is skewed to basic and acidic residues. The segment at 26–55 (RISEEKAKGHKDEKKDDEEEGPKPSSDLEA) is disordered. The stretch at 112 to 410 (FSPLRRISIK…VAMAYEEQNQ (299 aa)) is one I repeat. The chain crosses the membrane as a helical span at residues 126–145 (SLFSMLIMCTILTNCIFMTM). Residues 146 to 150 (SNPPD) lie on the Extracellular side of the membrane. A helical transmembrane segment spans residues 151-172 (WTKNVEYTFTGIYTFESLIKIL). Residues 173-185 (ARGFCVGEFTFLR) lie on the Cytoplasmic side of the membrane. Residues 186 to 204 (DPWNWLDFVVIVFAYLTEF) traverse the membrane as a helical segment. At 205–210 (VNLGNV) the chain is on the extracellular side. Residues 211–227 (SALRTFRVLRALKTISV) form a helical membrane-spanning segment. At 228–241 (IPGLKTIVGALIQS) the chain is on the cytoplasmic side. A helical transmembrane segment spans residues 242–267 (VKKLSDVMILTVFCLSVFALIGLQLF). Residues 268–346 (MGNLKHKCFR…PDYGYTSFDT (79 aa)) lie on the Extracellular side of the membrane. The cysteines at positions 275 and 324 are disulfide-linked. Positions 347 to 363 (FGWAFLALFRLMTQDYW) form an intramembrane region, pore-forming. Residues 364–376 (ENLYQQTLRAAGK) lie on the Extracellular side of the membrane. A helical transmembrane segment spans residues 377–402 (TYMIFFVVVIFLGSFYLINLILAVVA). Residues 402–449 (AMAYEEQNQANIEEAKQKELEFQQMLDRLKKEQEEAEAIAAAAAEYTS) adopt a coiled-coil conformation. Topologically, residues 403–744 (MAYEEQNQAN…FIYFIVMDPF (342 aa)) are cytoplasmic. The segment covering 458-471 (LSESSSETSRLSSK) has biased composition (low complexity). Disordered regions lie at residues 458–540 (LSES…SIRG) and 574–609 (HSIF…RSPP). Positions 474–486 (KERRNRRKKKKQK) are enriched in basic residues. Composition is skewed to basic and acidic residues over residues 489–509 (SGEE…ESIR) and 574–584 (HSIFGDNESRR). Residues 684 to 708 (LRQRAMSRASILTNTVEELEESRQK) are a coiled coil. Residues 725 to 988 (CSPYWIKFKK…EEDTDANNLQ (264 aa)) form an II repeat. The chain crosses the membrane as a helical span at residues 745-761 (VDLAITICIVLNTLFMA). Topologically, residues 762–770 (MEHHPMTDE) are extracellular. The helical transmembrane segment at 771 to 795 (FKNVLAVGNLVFTGIFAAEMVLKLI) threads the bilayer. Residues 796–804 (AMDPYEYFQ) lie on the Cytoplasmic side of the membrane. Residues 805-821 (VGWNIFDSLIVTLSLVE) form a helical membrane-spanning segment. The Extracellular portion of the chain corresponds to 822–830 (LFLADVEGL). A helical transmembrane segment spans residues 831–847 (SVLRSFRLLRVFKLAKS). At 848–864 (WPTLNMLIKIIGNSVGA) the chain is on the cytoplasmic side. A helical membrane pass occupies residues 865–887 (LGNLTLVLAIIVFIFAVVGMQLF). Residues 888-914 (GKSYKECVCKINENCKLPRWHMNDFFH) are Extracellular-facing. C896 and C902 are joined by a disulfide. Residues 915 to 927 (SFLIVFRVLCGEW) constitute an intramembrane region (pore-forming). At 928-939 (IETMWDCMEVAG) the chain is on the extracellular side. C934 and C943 are disulfide-bonded. A helical membrane pass occupies residues 940–966 (QTMCLIVYMMVMVIGNLVVLNLFLALL). At 967 to 1185 (LSSFSSDNLT…WWTIRKTCYR (219 aa)) the chain is on the cytoplasmic side. Disordered stretches follow at residues 1015 to 1039 (KKPK…YISN) and 1089 to 1145 (PIAP…EPIN). Residues 1019–1035 (GSKDTKRTADPNNKREN) are compositionally biased toward basic and acidic residues. Acidic residues predominate over residues 1135-1145 (GEEEAEAEPIN). One copy of the III repeat lies at 1178 to 1486 (TIRKTCYRIV…KKYYNAMKKL (309 aa)). The helical transmembrane segment at 1186–1210 (IVEHSWFESFIVLMILLSSGALAFE) threads the bilayer. Topologically, residues 1211 to 1222 (DIYIEKKKTIKI) are extracellular. A helical membrane pass occupies residues 1223–1248 (ILEYADKIFTYIFILEMLLKWVAYGY). At 1249-1250 (KT) the chain is on the cytoplasmic side. The helical transmembrane segment at 1251-1276 (YFTNAWCWLDFLIVDVSLVTLVANTL) threads the bilayer. The Extracellular segment spans residues 1277–1285 (GYSDLGPIK). The helical transmembrane segment at 1286 to 1302 (SLRTLRALRPLRALSRF) threads the bilayer. The Cytoplasmic portion of the chain corresponds to 1303-1315 (EGMRVVVNALIGA). The chain crosses the membrane as a helical span at residues 1316 to 1340 (IPSIMNVLLVCLIFWLIFSIMGVNL). At 1341 to 1392 (FAGKFYECVNTTDGSRFSVSQVANRSECFALMNVSGNVRWKNLKVNFDNVGL) the chain is on the extracellular side. Cysteines 1348 and 1368 form a disulfide. An intramembrane region (pore-forming) is located at residues 1393-1403 (GYLSLLQVATF). At 1404 to 1429 (KGWMDIMYAAVDSVNVNAQPIYEYNL) the chain is on the extracellular side. A helical transmembrane segment spans residues 1430–1455 (YMYIYFVIFIIFGSFFTLNLFIGVII). At 1456 to 1512 (DNFNQQKKKLGGQDIFMTEEQKKYYNAMKKLGSKKPQKPIPRPGNKFQGCIFDLVTN) the chain is on the cytoplasmic side. S1488 is subject to Phosphoserine; by PKC. The stretch at 1495-1793 (IPRPGNKFQG…WEKFDPDATQ (299 aa)) is one IV repeat. A helical transmembrane segment spans residues 1513 to 1532 (QAFDITIMVLICLNMVTMMV). Over 1533–1543 (EKEGQTDYMSF) the chain is Extracellular. A helical transmembrane segment spans residues 1544 to 1565 (VLYWINVVFIILFTGECVLKLI). The Cytoplasmic portion of the chain corresponds to 1566-1574 (SLRHYYFTV). A helical transmembrane segment spans residues 1575–1596 (GWNIFDFVVVILSIVGMFLAEM). At 1597-1605 (IEKYFVSPT) the chain is on the extracellular side. A helical membrane pass occupies residues 1606 to 1625 (LFRVIRLARIGRILRLIKGA). At 1626-1638 (KGIRTLLFALMMS) the chain is on the cytoplasmic side. A helical membrane pass occupies residues 1639–1661 (LPALFNIGLLLFLVMFIYAIFGM). Over 1662-1684 (SNFAYVKKEAGINDMFNFETFGN) the chain is Extracellular. The pore-forming intramembrane region spans 1685–1697 (SMICLFQITTSAG). Over 1698-1731 (WDGLLAPILNSAPPDCDPKKVHPGSSVEGDCGNP) the chain is Extracellular. An intrachain disulfide couples C1713 to C1728. A helical membrane pass occupies residues 1732-1757 (SVGIFYFVSYIIISFLVVVNMYIAVI). Over 1758-1984 (LENFSVATEE…EDKEKDESRK (227 aa)) the chain is Cytoplasmic. Residues 1887 to 1916 (EDVSATIIQRAYRRYRLRQNVKNISSIYIK) form the IQ domain. The tract at residues 1933–1984 (DNVNENSSPEKTDATASTISPPSYDSVTKPDQEKYETDKTEKEDKEKDESRK) is disordered. The span at 1946 to 1958 (ATASTISPPSYDS) shows a compositional bias: polar residues. The segment covering 1960-1984 (TKPDQEKYETDKTEKEDKEKDESRK) has biased composition (basic and acidic residues).

It belongs to the sodium channel (TC 1.A.1.10) family. Nav1.7/SCN9A subfamily. In terms of assembly, the Nav1.7 voltage-gated sodium channel consists of an ion-conducting alpha subunit SCN9A which is functional on its own regulated by one or more beta-1 (SCN1B), beta-2 (SCN2B), beta-3 (SCN3B) and beta-4 (SCN4B) subunits. SCN1B and SCN3B are non-covalently associated with SCN9A. SCN2B and SCN4B are disulfide-linked to SCN9A. SCN1B regulates channel inactivation. Interacts with NEDD4 and NEDD4L; regulates Nav1.7 activity most probably through ubiquitination and subsequent endocytosis. Interacts with TMEM233; modulates the gating properties of NaV1.7. Post-translationally, ubiquitinated by NEDD4L; which may promote its endocytosis. Phosphorylation at Ser-1488 by PKC in a highly conserved cytoplasmic loop increases peak sodium currents. Expressed strongly in sciatic nerves, with moderate levels in kidney. Not detected in liver, brain and muscle.

The protein resides in the cell membrane. Its subcellular location is the cell projection. The protein localises to the neuron projection. It localises to the axon. The catalysed reaction is Na(+)(in) = Na(+)(out). In terms of biological role, pore-forming subunit of Nav1.7, a voltage-gated sodium (Nav) channel that directly mediates the depolarizing phase of action potentials in excitable membranes. Navs, also called VGSCs (voltage-gated sodium channels) or VDSCs (voltage-dependent sodium channels), operate by switching between closed and open conformations depending on the voltage difference across the membrane. In the open conformation they allow Na(+) ions to selectively pass through the pore, along their electrochemical gradient. The influx of Na(+) ions provokes membrane depolarization, initiating the propagation of electrical signals throughout cells and tissues. Nav1.7 plays a crucial role in controlling the excitability and action potential propagation from nociceptor neurons, thereby contributing to the sensory perception of pain. The protein is Sodium channel protein type 9 subunit alpha of Mus musculus (Mouse).